Consider the following 125-residue polypeptide: Small ribosomal subunit protein uS13 (125 aa).

It belongs to the universal ribosomal protein uS13 family. Part of the 30S ribosomal subunit. Forms a loose heterodimer with protein S19. Forms two bridges to the 50S subunit in the 70S ribosome.

Located at the top of the head of the 30S subunit, it contacts several helices of the 16S rRNA. In the 70S ribosome it contacts the 23S rRNA (bridge B1a) and protein L5 of the 50S subunit (bridge B1b), connecting the 2 subunits; these bridges are implicated in subunit movement. Contacts the tRNAs in the A and P-sites. In Granulibacter bethesdensis (strain ATCC BAA-1260 / CGDNIH1), this protein is Small ribosomal subunit protein uS13.